The following is a 249-amino-acid chain: Aspartate/glutamate leucyltransferase (249 aa).

This sequence belongs to the R-transferase family. Bpt subfamily.

The protein resides in the cytoplasm. The enzyme catalyses N-terminal L-glutamyl-[protein] + L-leucyl-tRNA(Leu) = N-terminal L-leucyl-L-glutamyl-[protein] + tRNA(Leu) + H(+). The catalysed reaction is N-terminal L-aspartyl-[protein] + L-leucyl-tRNA(Leu) = N-terminal L-leucyl-L-aspartyl-[protein] + tRNA(Leu) + H(+). Functionally, functions in the N-end rule pathway of protein degradation where it conjugates Leu from its aminoacyl-tRNA to the N-termini of proteins containing an N-terminal aspartate or glutamate. This Brucella abortus (strain 2308) protein is Aspartate/glutamate leucyltransferase.